The following is a 43-amino-acid chain: Neurotrophic factor BDNF (43 aa).

This sequence belongs to the NGF-beta family.

The protein localises to the secreted. Promotes the survival of neuronal populations that are all located either in the central nervous system or directly connected to it. The protein is Neurotrophic factor BDNF (bdnf) of Raja clavata (Thornback ray).